Reading from the N-terminus, the 219-residue chain is uncharacterized protein (219 aa).

This is an uncharacterized protein from Rickettsia prowazekii (strain Madrid E).